The primary structure comprises 753 residues: Nibrin (753 aa).

In terms of domain architecture, FHA spans 22–81 (YVVGRKNCAFLIQDDQSISRSHAVLTVSRPETTHSQSVSVPVLTIKDTSKYGTFVNGSKL). BRCT domains are found at residues 101–191 (SKFR…PTPE) and 221–311 (GKTF…LAVI). Ser-274 is modified (phosphoserine). Ser-343 is subject to Phosphoserine; by ATM. Residues 442–606 (RECTPRQQSN…NTKQREENEM (165 aa)) form a disordered region. Residues 446–455 (PRQQSNSITN) show a composition bias toward polar residues. A Nuclear localization signal motif is present at residues 461 to 467 (RKRERAE). Polar residues predominate over residues 490–500 (CTESSASSAWN). Basic and acidic residues predominate over residues 517-528 (ESGELASDKTDI). A compositionally biased stretch (polar residues) spans 568–577 (QTANGDQEAQ). A compositionally biased stretch (basic and acidic residues) spans 585–606 (CLETKGSRTEEGNTKQREENEM). A FxF/Y motif motif is present at residues 739–748 (ADDLFRYDPN).

The protein belongs to the Nibrin family. As to quaternary structure, component of the MRN complex composed of two heterodimers RAD50 and mre11 associated with a single NBN.

The protein localises to the nucleus. It is found in the chromosome. The protein resides in the PML body. Its subcellular location is the telomere. Component of the MRN complex, which plays a central role in double-strand break (DSB) repair, DNA recombination, maintenance of telomere integrity and meiosis. The MRN complex is involved in the repair of DNA double-strand breaks (DSBs) via homologous recombination (HR), an error-free mechanism which primarily occurs during S and G2 phases. The complex (1) mediates the end resection of damaged DNA, which generates proper single-stranded DNA, a key initial steps in HR, and is (2) required for the recruitment of other repair factors and efficient activation of ATM and ATR upon DNA damage. The MRN complex possesses single-strand endonuclease activity and double-strand-specific 3'-5' exonuclease activity, which are provided by MRE11, to initiate end resection, which is required for single-strand invasion and recombination. Within the MRN complex, NBN acts as a protein-protein adapter, which specifically recognizes and binds phosphorylated proteins, promoting their recruitment to DNA damage sites. Recruits MRE11 and RAD50 components of the MRN complex to DSBs in response to DNA damage. Promotes the recruitment of PI3/PI4-kinase family members ATM, ATR, and probably DNA-PKcs to the DNA damage sites, activating their functions. Mediates the recruitment of phosphorylated RBBP8/CtIP to DSBs, leading to cooperation between the MRN complex and RBBP8/CtIP to initiate end resection. The MRN complex and rbbp8/CtIP are also required for chromosome alignment during metaphase. The protein is Nibrin (NBN) of Gallus gallus (Chicken).